The following is a 492-amino-acid chain: N-succinylglutamate 5-semialdehyde dehydrogenase (492 aa).

220–225 (GSASTG) is an NAD(+) binding site. Active-site residues include Glu-243 and Cys-277.

This sequence belongs to the aldehyde dehydrogenase family. AstD subfamily.

It catalyses the reaction N-succinyl-L-glutamate 5-semialdehyde + NAD(+) + H2O = N-succinyl-L-glutamate + NADH + 2 H(+). The protein operates within amino-acid degradation; L-arginine degradation via AST pathway; L-glutamate and succinate from L-arginine: step 4/5. Functionally, catalyzes the NAD-dependent reduction of succinylglutamate semialdehyde into succinylglutamate. The polypeptide is N-succinylglutamate 5-semialdehyde dehydrogenase (Salmonella paratyphi A (strain AKU_12601)).